Here is a 129-residue protein sequence, read N- to C-terminus: Small ribosomal subunit protein uS11 (129 aa).

It belongs to the universal ribosomal protein uS11 family. In terms of assembly, part of the 30S ribosomal subunit. Interacts with proteins S7 and S18. Binds to IF-3.

Its function is as follows. Located on the platform of the 30S subunit, it bridges several disparate RNA helices of the 16S rRNA. Forms part of the Shine-Dalgarno cleft in the 70S ribosome. This is Small ribosomal subunit protein uS11 from Methylorubrum populi (strain ATCC BAA-705 / NCIMB 13946 / BJ001) (Methylobacterium populi).